Here is a 503-residue protein sequence, read N- to C-terminus: Glutamate--tRNA ligase (503 aa).

Positions Pro12 to Gly22 match the 'HIGH' region motif. The 'KMSKS' region signature appears at Lys259 to Arg263. Lys262 contacts ATP.

It belongs to the class-I aminoacyl-tRNA synthetase family. Glutamate--tRNA ligase type 1 subfamily. In terms of assembly, monomer.

Its subcellular location is the cytoplasm. The enzyme catalyses tRNA(Glu) + L-glutamate + ATP = L-glutamyl-tRNA(Glu) + AMP + diphosphate. Catalyzes the attachment of glutamate to tRNA(Glu) in a two-step reaction: glutamate is first activated by ATP to form Glu-AMP and then transferred to the acceptor end of tRNA(Glu). This is Glutamate--tRNA ligase from Chlorobaculum parvum (strain DSM 263 / NCIMB 8327) (Chlorobium vibrioforme subsp. thiosulfatophilum).